We begin with the raw amino-acid sequence, 359 residues long: NADH-quinone oxidoreductase subunit H (359 aa).

8 consecutive transmembrane segments (helical) span residues 19–39 (IGWF…FIAL), 94–114 (FLFV…FAVL), 127–147 (VGLF…LAAG), 175–195 (IALL…IILM), 202–222 (FLHW…IYFI), 255–275 (FAVI…IISI), 301–321 (VWGA…QMWL), and 337–357 (CWKV…IWVI).

Belongs to the complex I subunit 1 family. In terms of assembly, NDH-1 is composed of 14 different subunits. Subunits NuoA, H, J, K, L, M, N constitute the membrane sector of the complex.

It localises to the cell inner membrane. It catalyses the reaction a quinone + NADH + 5 H(+)(in) = a quinol + NAD(+) + 4 H(+)(out). NDH-1 shuttles electrons from NADH, via FMN and iron-sulfur (Fe-S) centers, to quinones in the respiratory chain. The immediate electron acceptor for the enzyme in this species is believed to be ubiquinone. Couples the redox reaction to proton translocation (for every two electrons transferred, four hydrogen ions are translocated across the cytoplasmic membrane), and thus conserves the redox energy in a proton gradient. This subunit may bind ubiquinone. This chain is NADH-quinone oxidoreductase subunit H, found in Chlorobaculum tepidum (strain ATCC 49652 / DSM 12025 / NBRC 103806 / TLS) (Chlorobium tepidum).